The following is a 336-amino-acid chain: Telomere-binding protein cav (336 aa).

The interval 107 to 328 (RKKMVQPYPE…TITFQNSESE (222 aa)) is required for binding to Su(var)205. Disordered stretches follow at residues 137–158 (RLDR…SPAR) and 199–218 (SSDL…SEFQ). Short sequence motifs (su(var)205-binding Pro-containing repeat) lie at residues 225-231 (PETAINE) and 289-295 (PETEMNE). The segment covering 308–327 (MSIGPSIDSEGTITFQNSES) has biased composition (polar residues). Positions 308-336 (MSIGPSIDSEGTITFQNSESEPIDVDSIA) are disordered.

As to quaternary structure, interacts (via C-terminus) with Su(var)205 dimer (via hinge and chromoshadow domain) and with moi to form the terminin, telomere-capping, complex. Interacts with HP6, which is also part of the terminin complex.

It localises to the nucleus. It is found in the chromosome. The protein resides in the telomere. In terms of biological role, binds to chromosome ends in a sequence-dependent manner and is required for telomere capping. This is Telomere-binding protein cav from Drosophila sechellia (Fruit fly).